Consider the following 332-residue polypeptide: tRNA dimethylallyltransferase (332 aa).

Residue 30–37 (GPTAVGKT) participates in ATP binding. Residue 32 to 37 (TAVGKT) participates in substrate binding. The segment at 57–60 (DSMQ) is interaction with substrate tRNA.

It belongs to the IPP transferase family. Monomer. Mg(2+) serves as cofactor.

The catalysed reaction is adenosine(37) in tRNA + dimethylallyl diphosphate = N(6)-dimethylallyladenosine(37) in tRNA + diphosphate. Functionally, catalyzes the transfer of a dimethylallyl group onto the adenine at position 37 in tRNAs that read codons beginning with uridine, leading to the formation of N6-(dimethylallyl)adenosine (i(6)A). The polypeptide is tRNA dimethylallyltransferase (Natranaerobius thermophilus (strain ATCC BAA-1301 / DSM 18059 / JW/NM-WN-LF)).